The primary structure comprises 794 residues: Cadherin-12 (794 aa).

A signal peptide spans 1-23 (MLTRNCLSLLLWVLFDGGLLTPL). A propeptide spanning residues 24 to 54 (QPQPQQTLATEPRENVIHLPGQRSHFQRVKR) is cleaved from the precursor. Cadherin domains lie at 55 to 160 (GWVW…EPKF), 161 to 269 (LDGP…PPRF), 270 to 384 (PKSI…PPVF), 385 to 487 (SKPL…EFPP), and 488 to 609 (EISV…IFLP). At 55 to 609 (GWVWNQFFVL…SCNVEAIFLP (555 aa)) the chain is on the extracellular side. N256 is a glycosylation site (N-linked (GlcNAc...) asparagine). 3 N-linked (GlcNAc...) asparagine glycosylation sites follow: N456, N537, and N545. The chain crosses the membrane as a helical span at residues 610-637 (VGLSTGALIAILLCIVILLAIVVLYVAL). Residues 638-794 (RRQKKKDTLM…EESYNPDKVT (157 aa)) lie on the Cytoplasmic side of the membrane. A Phosphoserine modification is found at S787.

Brain.

Its subcellular location is the cell membrane. Functionally, cadherins are calcium-dependent cell adhesion proteins. They preferentially interact with themselves in a homophilic manner in connecting cells; cadherins may thus contribute to the sorting of heterogeneous cell types. The chain is Cadherin-12 (CDH12) from Homo sapiens (Human).